Consider the following 812-residue polypeptide: ISWI one complex protein 2 (812 aa).

Disordered stretches follow at residues 1–21 (MRTK…AGAA), 614–646 (MGNS…KRKP), 679–704 (AKQR…LEEL), and 762–812 (QTGS…PPTN). A compositionally biased stretch (polar residues) spans 627-638 (PQSTLEPSTKSS). Positions 673 to 714 (ELKIIRAKQRKQQEDRERRKKMKEEKKRLEELAKKRELTESV) form a coiled coil. The segment covering 683-704 (KQQEDRERRKKMKEEKKRLEEL) has biased composition (basic and acidic residues). Over residues 769-796 (PQAPQAPQTSQASIQPQQQQQQQQQQQP) the composition is skewed to low complexity.

As to quaternary structure, component of the ISW1B complex, which at least consists of ISW1, IOC2 and IOC4.

The protein localises to the nucleus. Functions as a component of the ISW1B complex, which acts in remodeling the chromatin by catalyzing an ATP-dependent alteration in the structure of nucleosomal DNA. The ISW1B complex acts within coding regions to control the amount of RNA polymerase II released into productive elongation and to coordinate elongation with termination and pre-mRNA processing. This chain is ISWI one complex protein 2 (IOC2), found in Saccharomyces cerevisiae (strain ATCC 204508 / S288c) (Baker's yeast).